A 314-amino-acid chain; its full sequence is Elongator complex protein 5 (314 aa).

Belongs to the ELP5 family. In terms of assembly, component of the elongator complex.

It localises to the cytoplasm. The protein resides in the nucleus. The protein operates within tRNA modification; 5-methoxycarbonylmethyl-2-thiouridine-tRNA biosynthesis. In terms of biological role, component of the elongator complex, a multiprotein complex which is required for multiple tRNA modifications, including mcm5U (5-methoxycarbonylmethyl uridine), mcm5s2U (5-methoxycarbonylmethyl-2-thiouridine), and ncm5U (5-carbamoylmethyl uridine). The elongator complex catalyzes formation of carboxymethyluridine in the wobble base at position 34 in tRNAs. The chain is Elongator complex protein 5 (iki1) from Schizosaccharomyces pombe (strain 972 / ATCC 24843) (Fission yeast).